A 261-amino-acid chain; its full sequence is Ribonuclease HII (261 aa).

The 189-residue stretch at 71–259 folds into the RNase H type-2 domain; that stretch reads KYIAGVDEVG…VKEAKLHFDS (189 aa). A divalent metal cation is bound by residues D77, E78, and D169.

The protein belongs to the RNase HII family. The cofactor is Mn(2+). Mg(2+) is required as a cofactor.

The protein localises to the cytoplasm. The catalysed reaction is Endonucleolytic cleavage to 5'-phosphomonoester.. Its function is as follows. Endonuclease that specifically degrades the RNA of RNA-DNA hybrids. The chain is Ribonuclease HII from Listeria monocytogenes serotype 4a (strain HCC23).